The sequence spans 458 residues: Tissue-resident T-cell transcription regulator protein ZNF683 (458 aa).

Disordered stretches follow at residues 84–109 (PQDL…TDSE) and 249–275 (TLHS…APTR). C2H2-type zinc fingers lie at residues 301 to 323 (YECN…LRVH), 329 to 351 (FQCA…HLVH), and 357 to 379 (HQCQ…LRLH).

It belongs to the krueppel C2H2-type zinc-finger protein family. In terms of tissue distribution, expressed in tissue-resident memory T (Trm) cell population in non-lymphoid organs, such as skin and gut. Expressed in innate lymphocytes, including tissue-resident natural killer (trNK) and natural killer T (NKT) cells in thymus, spleen and liver.

The protein resides in the nucleus. In terms of biological role, transcription factor that mediates a transcriptional program in various innate and adaptive immune tissue-resident lymphocyte T-cell types such as tissue-resident memory T (Trm), natural killer (trNK) and natural killer T (NKT) cells and negatively regulates gene expression of proteins that promote the egress of tissue-resident T-cell populations from non-lymphoid organs. Plays a role in the development, retention and long-term establishment of adaptive and innate tissue-resident lymphocyte T-cell types in non-lymphoid organs, such as the skin and gut, but also in other nonbarrier tissues like liver and kidney, and therefore may provide immediate immunological protection against reactivating infections or viral reinfection. Also plays a role in the differentiation of both thymic and peripheral NKT cells. Negatively regulates the accumulation of interferon-gamma (IFN-gamma) in NKT cells at steady state or after antigenic stimulation. Positively regulates granzyme B production in NKT cells after innate stimulation. Associates with the transcriptional repressor PRDM1/BLIMP1 to chromatin at gene promoter regions. The chain is Tissue-resident T-cell transcription regulator protein ZNF683 from Mus musculus (Mouse).